Consider the following 308-residue polypeptide: Glutaminase (308 aa).

Ser66, Asn117, Glu161, Asn168, Tyr192, Tyr244, and Val262 together coordinate substrate.

The protein belongs to the glutaminase family. As to quaternary structure, homotetramer.

It carries out the reaction L-glutamine + H2O = L-glutamate + NH4(+). This Salmonella heidelberg (strain SL476) protein is Glutaminase.